Consider the following 67-residue polypeptide: Large ribosomal subunit protein uL29 (67 aa).

Belongs to the universal ribosomal protein uL29 family.

The sequence is that of Large ribosomal subunit protein uL29 from Methanosarcina barkeri (strain Fusaro / DSM 804).